A 521-amino-acid polypeptide reads, in one-letter code: UDP-N-acetylmuramoyl-L-alanyl-D-glutamate--2,6-diaminopimelate ligase (521 aa).

Ser33 is a binding site for UDP-N-acetyl-alpha-D-muramoyl-L-alanyl-D-glutamate. 116–122 (GTNGKTT) provides a ligand contact to ATP. Residues 158–159 (TT), Ser185, Gln191, and Arg193 contribute to the UDP-N-acetyl-alpha-D-muramoyl-L-alanyl-D-glutamate site. At Lys225 the chain carries N6-carboxylysine. Meso-2,6-diaminopimelate-binding positions include Arg409, 433 to 436 (DNPR), Gly483, and Glu487. The Meso-diaminopimelate recognition motif signature appears at 433–436 (DNPR).

The protein belongs to the MurCDEF family. MurE subfamily. Mg(2+) is required as a cofactor. Carboxylation is probably crucial for Mg(2+) binding and, consequently, for the gamma-phosphate positioning of ATP.

The protein localises to the cytoplasm. It carries out the reaction UDP-N-acetyl-alpha-D-muramoyl-L-alanyl-D-glutamate + meso-2,6-diaminopimelate + ATP = UDP-N-acetyl-alpha-D-muramoyl-L-alanyl-gamma-D-glutamyl-meso-2,6-diaminopimelate + ADP + phosphate + H(+). It participates in cell wall biogenesis; peptidoglycan biosynthesis. In terms of biological role, catalyzes the addition of meso-diaminopimelic acid to the nucleotide precursor UDP-N-acetylmuramoyl-L-alanyl-D-glutamate (UMAG) in the biosynthesis of bacterial cell-wall peptidoglycan. The protein is UDP-N-acetylmuramoyl-L-alanyl-D-glutamate--2,6-diaminopimelate ligase of Nitrosomonas europaea (strain ATCC 19718 / CIP 103999 / KCTC 2705 / NBRC 14298).